Consider the following 154-residue polypeptide: Superoxide dismutase [Cu-Zn] (154 aa).

Cu cation contacts are provided by His47, His49, and His64. Cys58 and Cys147 are oxidised to a cystine. Positions 64, 72, 81, and 84 each coordinate Zn(2+). His121 lines the Cu cation pocket. Residue Arg144 participates in substrate binding.

It belongs to the Cu-Zn superoxide dismutase family. As to quaternary structure, homodimer. Requires Cu cation as cofactor. Zn(2+) serves as cofactor.

The protein localises to the cytoplasm. The enzyme catalyses 2 superoxide + 2 H(+) = H2O2 + O2. Destroys radicals which are normally produced within the cells and which are toxic to biological systems. In Candida albicans (Yeast), this protein is Superoxide dismutase [Cu-Zn] (SOD1).